The primary structure comprises 81 residues: MQPLQILAIVALVVAAIIAIVVWTIVYIEYRKILRQRKIDRLIDRITERAEDSGNESEGDQEELSALVERGHLAPWDVDDL.

Residues 1–7 (MQPLQIL) are Extracellular-facing. The chain crosses the membrane as a helical span at residues 8–28 (AIVALVVAAIIAIVVWTIVYI). Topologically, residues 29-81 (EYRKILRQRKIDRLIDRITERAEDSGNESEGDQEELSALVERGHLAPWDVDDL) are cytoplasmic. Residues 50-81 (AEDSGNESEGDQEELSALVERGHLAPWDVDDL) are disordered. 2 positions are modified to phosphoserine; by host CK2: Ser53 and Ser57. A compositionally biased stretch (acidic residues) spans 53–63 (SGNESEGDQEE).

It belongs to the HIV-1 VPU protein family. In terms of assembly, homopentamer. Interacts with host CD4 and BRTC; these interactions induce proteasomal degradation of CD4. Interacts with host BST2; this interaction leads to the degradation of host BST2. Interacts with host FBXW11. Interacts with host AP1M1; this interaction plays a role in the mistrafficking and subsequent degradation of host BST2. Interacts with host RANBP2; this interaction allows Vpu to down-regulate host BLM sumoylation. Post-translationally, phosphorylated by host CK2. This phosphorylation is necessary for interaction with human BTRC and degradation of CD4.

Its subcellular location is the host membrane. Its activity is regulated as follows. Ion channel activity is inhibited by hexamethylene amiloride in vitro. Enhances virion budding by targeting host CD4 and Tetherin/BST2 to proteasome degradation. Degradation of CD4 prevents any unwanted premature interactions between viral Env and its host receptor CD4 in the endoplasmic reticulum. Degradation of antiretroviral protein Tetherin/BST2 is important for virion budding, as BST2 tethers new viral particles to the host cell membrane. Mechanistically, Vpu bridges either CD4 or BST2 to BTRC, a substrate recognition subunit of the Skp1/Cullin/F-box protein E3 ubiquitin ligase, induces their ubiquitination and subsequent proteasomal degradation. The alteration of the E3 ligase specificity by Vpu seems to promote the degradation of host IKBKB, leading to NF-kappa-B down-regulation and subsequent apoptosis. Acts as a viroporin that forms an oligomeric ion channel in membranes. Modulates the host DNA repair mechanisms to promote degradation of nuclear viral cDNA in cells that are already productively infected in order to suppress immune sensing and proviral hyper-integration (superinfection). Manipulates PML-NBs and modulates SUMOylation of host BLM protein thereby enhancing its DNA-end processing activity toward viral unintegrated linear DNA. Also inhibits RAD52-mediated homologous repair of viral cDNA, preventing the generation of dead-end circular forms of single copies of the long terminal repeat and permitting sustained nucleolytic attack. This Human immunodeficiency virus type 1 group M subtype B (isolate SF162) (HIV-1) protein is Protein Vpu.